The chain runs to 742 residues: Phosphoribosylformylglycinamidine synthase subunit PurL (742 aa).

His-54 is an active-site residue. Residues Tyr-57 and Lys-96 each contribute to the ATP site. Residue Glu-98 participates in Mg(2+) binding. Residues 99-102 (SHNH) and Arg-121 each bind substrate. The Proton acceptor role is filled by His-100. Mg(2+) is bound at residue Asp-122. Gln-245 is a substrate binding site. Residue Asp-273 participates in Mg(2+) binding. Residue 317–319 (ESQ) coordinates substrate. 2 residues coordinate ATP: Asp-500 and Gly-537. Mg(2+) is bound at residue Asn-538. A substrate-binding site is contributed by Ser-540.

It belongs to the FGAMS family. In terms of assembly, monomer. Part of the FGAM synthase complex composed of 1 PurL, 1 PurQ and 2 PurS subunits.

Its subcellular location is the cytoplasm. The catalysed reaction is N(2)-formyl-N(1)-(5-phospho-beta-D-ribosyl)glycinamide + L-glutamine + ATP + H2O = 2-formamido-N(1)-(5-O-phospho-beta-D-ribosyl)acetamidine + L-glutamate + ADP + phosphate + H(+). It functions in the pathway purine metabolism; IMP biosynthesis via de novo pathway; 5-amino-1-(5-phospho-D-ribosyl)imidazole from N(2)-formyl-N(1)-(5-phospho-D-ribosyl)glycinamide: step 1/2. Part of the phosphoribosylformylglycinamidine synthase complex involved in the purines biosynthetic pathway. Catalyzes the ATP-dependent conversion of formylglycinamide ribonucleotide (FGAR) and glutamine to yield formylglycinamidine ribonucleotide (FGAM) and glutamate. The FGAM synthase complex is composed of three subunits. PurQ produces an ammonia molecule by converting glutamine to glutamate. PurL transfers the ammonia molecule to FGAR to form FGAM in an ATP-dependent manner. PurS interacts with PurQ and PurL and is thought to assist in the transfer of the ammonia molecule from PurQ to PurL. The protein is Phosphoribosylformylglycinamidine synthase subunit PurL of Oceanobacillus iheyensis (strain DSM 14371 / CIP 107618 / JCM 11309 / KCTC 3954 / HTE831).